A 257-amino-acid chain; its full sequence is E3 ubiquitin-protein ligase RNF170 (257 aa).

Topologically, residues 1–24 (MADNQEGRPYFPLDEGSIIEGVSD) are lumenal. The chain crosses the membrane as a helical span at residues 25 to 45 (QVIVVVLLSFVAVGSLLYLLL). At 46–200 (RNDEQNIHPE…GGLFWMFRIR (155 aa)) the chain is on the cytoplasmic side. An RING-type zinc finger spans residues 87 to 130 (CPVCLQQATFPVETNCGHLFCGSCIIAYWRYGSWLGAINCPICR). Residues 201–221 (IVLCLLGALFYLVSPLDIIPE) traverse the membrane as a helical segment. Residue alanine 222 is a topological domain, lumenal. A helical membrane pass occupies residues 223-243 (VFGLLGFLDDFFVLFLLLIYI). Over 244–257 (SIMYREVVTQRLYR) the chain is Cytoplasmic.

The protein resides in the endoplasmic reticulum membrane. It carries out the reaction S-ubiquitinyl-[E2 ubiquitin-conjugating enzyme]-L-cysteine + [acceptor protein]-L-lysine = [E2 ubiquitin-conjugating enzyme]-L-cysteine + N(6)-ubiquitinyl-[acceptor protein]-L-lysine.. It functions in the pathway protein modification; protein ubiquitination. Functionally, E3 ubiquitin-protein ligase that plays an essential role in stimulus-induced inositol 1,4,5-trisphosphate receptor (ITPR) ubiquitination and degradation via the endoplasmic reticulum-associated degradation (ERAD) pathway. Also involved in ITPR turnover in resting cells. The chain is E3 ubiquitin-protein ligase RNF170 (rnf170) from Xenopus tropicalis (Western clawed frog).